The chain runs to 293 residues: ATP synthase subunit a (293 aa).

A run of 6 helical transmembrane segments spans residues 40 to 60, 97 to 117, 151 to 171, 188 to 208, 225 to 245, and 264 to 284; these read DSLF…WLAA, LFVA…NALD, DLNV…YYGI, FHAH…LNLI, MFAG…WTGF, and AIFH…LTLV.

This sequence belongs to the ATPase A chain family. F-type ATPases have 2 components, CF(1) - the catalytic core - and CF(0) - the membrane proton channel. CF(1) has five subunits: alpha(3), beta(3), gamma(1), delta(1), epsilon(1). CF(0) has three main subunits: a(1), b(2) and c(9-12). The alpha and beta chains form an alternating ring which encloses part of the gamma chain. CF(1) is attached to CF(0) by a central stalk formed by the gamma and epsilon chains, while a peripheral stalk is formed by the delta and b chains.

The protein resides in the cell inner membrane. Its function is as follows. Key component of the proton channel; it plays a direct role in the translocation of protons across the membrane. The sequence is that of ATP synthase subunit a from Bordetella bronchiseptica (strain ATCC BAA-588 / NCTC 13252 / RB50) (Alcaligenes bronchisepticus).